A 605-amino-acid polypeptide reads, in one-letter code: Protein phosphatase 1D (605 aa).

The segment at 1 to 101 is interaction with CHEK1; it reads MAGLYSLGVS…CRRRSSVAFF (101 aa). The PPM-type phosphatase domain occupies 8–375; sequence GVSVFSDQGG…DNTSAIVICI (368 aa). A disordered region spans residues 28–90; that stretch reads VVEPEPTAEE…DAGASPAPSR (63 aa). A phosphoserine mark is found at Ser-40 and Ser-85. The Mn(2+) site is built by Asp-105, Gly-106, Asp-314, and Asp-366. Residues 516-591 are disordered; it reads STPGQMKAQE…RRLRGQKKIG (76 aa). 2 stretches are compositionally biased toward polar residues: residues 530–544 and 555–577; these read PPTN…SNSG and LSRS…NSVK. Residues 579-588 are compositionally biased toward basic residues; that stretch reads TMRRRLRGQK.

It belongs to the PP2C family. As to quaternary structure, interacts with CHEK1 and CHEK2; dephosphorylates them. Interacts with MAPK14. Requires Mg(2+) as cofactor. It depends on Mn(2+) as a cofactor. Expressed in fetal and adult brain. Also detected in fetal liver and skeletal muscle, but not in their adult counterparts.

It is found in the nucleus. The protein localises to the cytoplasm. The protein resides in the cytosol. It catalyses the reaction O-phospho-L-seryl-[protein] + H2O = L-seryl-[protein] + phosphate. The catalysed reaction is O-phospho-L-threonyl-[protein] + H2O = L-threonyl-[protein] + phosphate. Functionally, involved in the negative regulation of p53 expression. Required for the relief of p53-dependent checkpoint mediated cell cycle arrest. Binds to and dephosphorylates 'Ser-15' of TP53 and 'Ser-345' of CHEK1 which contributes to the functional inactivation of these proteins. Mediates MAPK14 dephosphorylation and inactivation. Is also an important regulator of global heterochromatin silencing and critical in maintaining genome integrity. This chain is Protein phosphatase 1D (PPM1D), found in Homo sapiens (Human).